The following is a 104-amino-acid chain: uncharacterized protein (104 aa).

This is an uncharacterized protein from Mycoplasma pneumoniae (strain ATCC 29342 / M129 / Subtype 1) (Mycoplasmoides pneumoniae).